The chain runs to 382 residues: Mannitol-1-phosphate 5-dehydrogenase (382 aa).

3–14 serves as a coordination point for NAD(+); that stretch reads ALHFGAGNIGRG.

Belongs to the mannitol dehydrogenase family.

The catalysed reaction is D-mannitol 1-phosphate + NAD(+) = beta-D-fructose 6-phosphate + NADH + H(+). In Cronobacter sakazakii (strain ATCC BAA-894) (Enterobacter sakazakii), this protein is Mannitol-1-phosphate 5-dehydrogenase.